The following is a 271-amino-acid chain: Proteasome inhibitor PI31 subunit (271 aa).

At Ala2 the chain carries N-acetylalanine. Residues 2–150 (AGLEVLFASA…PIHEQWEKAN (149 aa)) form an important for homodimerization and interaction with FBXO7 region. Residue Ser153 is modified to Phosphoserine. Arg205 is modified (omega-N-methylarginine). Arg219 carries the asymmetric dimethylarginine modification. The interval 222–271 (IDPSSGLPNRLPPGAVPPGARFDPFGPIGTSPPGPNPDHLPPPGYDDMYL) is disordered. Arg231 is modified (omega-N-methylarginine). Residues 251 to 265 (TSPPGPNPDHLPPPG) show a composition bias toward pro residues. The residue at position 252 (Ser252) is a Phosphoserine.

It belongs to the proteasome inhibitor PI31 family. In terms of assembly, monomer and homodimer. Interacts with FBXO7.

It localises to the cytoplasm. The protein resides in the endoplasmic reticulum. In terms of biological role, plays an important role in control of proteasome function. Inhibits the hydrolysis of protein and peptide substrates by the 20S proteasome. Also inhibits the activation of the proteasome by the proteasome regulatory proteins PA700 and PA28. This chain is Proteasome inhibitor PI31 subunit (PSMF1), found in Pongo abelii (Sumatran orangutan).